Here is a 250-residue protein sequence, read N- to C-terminus: Exosome complex component Rrp41 (250 aa).

It belongs to the RNase PH family. Rrp41 subfamily. In terms of assembly, component of the archaeal exosome complex. Forms a hexameric ring-like arrangement composed of 3 Rrp41-Rrp42 heterodimers. The hexameric ring associates with a trimer of Rrp4 and/or Csl4 subunits.

The protein localises to the cytoplasm. Its function is as follows. Catalytic component of the exosome, which is a complex involved in RNA degradation. Has 3'-&gt;5' exoribonuclease activity. Can also synthesize heteromeric RNA-tails. This is Exosome complex component Rrp41 from Pyrococcus furiosus (strain ATCC 43587 / DSM 3638 / JCM 8422 / Vc1).